A 164-amino-acid polypeptide reads, in one-letter code: Putative 4-hydroxy-4-methyl-2-oxoglutarate aldolase (164 aa).

Substrate-binding positions include 75–78 (GDML) and arginine 97. Aspartate 98 is an a divalent metal cation binding site.

The protein belongs to the class II aldolase/RraA-like family. Homotrimer. A divalent metal cation is required as a cofactor.

The catalysed reaction is 4-hydroxy-4-methyl-2-oxoglutarate = 2 pyruvate. It carries out the reaction oxaloacetate + H(+) = pyruvate + CO2. In terms of biological role, catalyzes the aldol cleavage of 4-hydroxy-4-methyl-2-oxoglutarate (HMG) into 2 molecules of pyruvate. Also contains a secondary oxaloacetate (OAA) decarboxylase activity due to the common pyruvate enolate transition state formed following C-C bond cleavage in the retro-aldol and decarboxylation reactions. The sequence is that of Putative 4-hydroxy-4-methyl-2-oxoglutarate aldolase from Hahella chejuensis (strain KCTC 2396).